Consider the following 603-residue polypeptide: Probable lysosomal cobalamin transporter (603 aa).

9 consecutive transmembrane segments (helical) span residues 13–33 (IWVA…ITVF), 50–70 (IVSL…IALV), 99–119 (IVYY…IPFA), 150–170 (IAFI…PTAA), 201–221 (LLMT…LALL), 318–338 (LFGG…MLIT), 353–373 (GYIL…VKAA), 381–401 (ILMA…IASV), and 422–442 (ALLI…YAVV). A glycan (N-linked (GlcNAc...) asparagine) is linked at N509. Residues 512 to 532 (VFGAIDFWAQFAFLTVFLLVF) form a helical membrane-spanning segment. N-linked (GlcNAc...) asparagine glycosylation occurs at N543. The tract at residues 578-603 (AKRTVGGHPNGQGYGTSGTNGTASSR) is disordered. Over residues 585-595 (HPNGQGYGTSG) the composition is skewed to gly residues. Residue N597 is glycosylated (N-linked (GlcNAc...) asparagine).

Belongs to the LIMR family. LMBRD1 subfamily.

Its subcellular location is the lysosome membrane. Its function is as follows. Probable lysosomal cobalamin transporter. Required to export cobalamin from lysosomes allowing its conversion to cofactors. This chain is Probable lysosomal cobalamin transporter, found in Neurospora crassa (strain ATCC 24698 / 74-OR23-1A / CBS 708.71 / DSM 1257 / FGSC 987).